The sequence spans 460 residues: UDP-N-acetylmuramate--L-alanine ligase (460 aa).

118–124 (GAHGKTT) serves as a coordination point for ATP.

This sequence belongs to the MurCDEF family.

It localises to the cytoplasm. It carries out the reaction UDP-N-acetyl-alpha-D-muramate + L-alanine + ATP = UDP-N-acetyl-alpha-D-muramoyl-L-alanine + ADP + phosphate + H(+). It participates in cell wall biogenesis; peptidoglycan biosynthesis. In terms of biological role, cell wall formation. The chain is UDP-N-acetylmuramate--L-alanine ligase from Clostridium botulinum (strain Eklund 17B / Type B).